We begin with the raw amino-acid sequence, 818 residues long: RNA-directed RNA polymerase (818 aa).

Residues 524 to 641 enclose the RdRp catalytic domain; the sequence is PVAIGLDASR…IVERRNLKQI (118 aa).

The protein belongs to the tombusviridae RNA polymerase family.

It catalyses the reaction RNA(n) + a ribonucleoside 5'-triphosphate = RNA(n+1) + diphosphate. Its function is as follows. RNA-dependent RNA polymerase that plays an essential role in the virus replication. The polypeptide is RNA-directed RNA polymerase (Cucumis sativus (Cucumber)).